The following is a 96-amino-acid chain: MKTLRLNNVTLEMAAYQEESEPKRKIAFTLNVTSETYHDIAVLLYEKTFNVEVPERDLAFRGEMTNYSTSLTNLYEPGAVSEFYIEITEIDKNADS.

This is an uncharacterized protein from Bacillus subtilis (strain 168).